The following is a 175-amino-acid chain: NADH-ubiquinone oxidoreductase chain 6 (175 aa).

5 helical membrane passes run 1-21 (MMTY…VGFS), 25-45 (SPIY…GIVL), 48-68 (GGSF…LVVF), 88-108 (TVLS…GYCI), and 149-169 (YGTW…LVVM).

This sequence belongs to the complex I subunit 6 family. Core subunit of respiratory chain NADH dehydrogenase (Complex I) which is composed of 45 different subunits.

The protein resides in the mitochondrion inner membrane. It catalyses the reaction a ubiquinone + NADH + 5 H(+)(in) = a ubiquinol + NAD(+) + 4 H(+)(out). Functionally, core subunit of the mitochondrial membrane respiratory chain NADH dehydrogenase (Complex I) which catalyzes electron transfer from NADH through the respiratory chain, using ubiquinone as an electron acceptor. Essential for the catalytic activity and assembly of complex I. This Urotrichus talpoides (Japanese shrew mole) protein is NADH-ubiquinone oxidoreductase chain 6 (MT-ND6).